A 421-amino-acid chain; its full sequence is ATP-dependent RNA helicase RhlB (421 aa).

Residues glutamine 9–alanine 37 carry the Q motif motif. The Helicase ATP-binding domain occupies leucine 40–isoleucine 219. Alanine 53–threonine 60 contributes to the ATP binding site. Residues aspartate 165–aspartate 168 carry the DEAD box motif. Residues arginine 245 to methionine 390 form the Helicase C-terminal domain. Residues aspartate 392–glycine 421 are disordered. A compositionally biased stretch (low complexity) spans proline 402–proline 414.

It belongs to the DEAD box helicase family. RhlB subfamily. As to quaternary structure, component of the RNA degradosome, which is a multiprotein complex involved in RNA processing and mRNA degradation.

It is found in the cytoplasm. It catalyses the reaction ATP + H2O = ADP + phosphate + H(+). DEAD-box RNA helicase involved in RNA degradation. Has RNA-dependent ATPase activity and unwinds double-stranded RNA. This is ATP-dependent RNA helicase RhlB from Escherichia coli O157:H7 (strain EC4115 / EHEC).